Reading from the N-terminus, the 325-residue chain is RepFIB replication protein A (325 aa).

A disordered region spans residues 279–298 (APNDESKENPLPPSPAEKVS).

Belongs to the initiator RepB protein family.

Functionally, this protein is essential for plasmid replication; it is involved in copy control functions. In vitro, binds to the DNA repeat units, BCDD'D'', EFG and HIJ. This chain is RepFIB replication protein A (repB), found in Escherichia coli (strain K12).